Reading from the N-terminus, the 136-residue chain is MARTKQTARKSTGGKAPRKQLVTKAARKSAPSTGGMKKPHRYRPGTVALREIRRHQKSTELLIRKLPFQRLVREIAQDFKTDLRFQSAAIGALQEASEAYLVGLFEDTNLCAIHAKRVTVMPRDIQLARRIRGERA.

Residues 1–44 form a disordered region; the sequence is MARTKQTARKSTGGKAPRKQLVTKAARKSAPSTGGMKKPHRYRP. Residue Arg3 is modified to Asymmetric dimethylarginine; by PRMT6; alternate. Arg3 bears the Citrulline; alternate mark. Thr4 bears the Phosphothreonine; by HASPIN mark. An Allysine; alternate modification is found at Lys5. Lys5 carries the N6,N6,N6-trimethyllysine; alternate modification. Lys5 is modified (N6,N6-dimethyllysine; alternate). Lys5 carries the N6-(2-hydroxyisobutyryl)lysine; alternate modification. Residue Lys5 is modified to N6-(beta-hydroxybutyryl)lysine; alternate. At Lys5 the chain carries N6-acetyllysine; alternate. An N6-methyllysine; alternate modification is found at Lys5. At Gln6 the chain carries 5-glutamyl dopamine; alternate. At Gln6 the chain carries 5-glutamyl serotonin; alternate. Thr7 is subject to Phosphothreonine; by PKC. Symmetric dimethylarginine is present on Arg9. An N6,N6,N6-trimethyllysine; alternate modification is found at Lys10. Lys10 carries the N6,N6-dimethyllysine; alternate modification. At Lys10 the chain carries N6-(2-hydroxyisobutyryl)lysine; alternate. At Lys10 the chain carries N6-(beta-hydroxybutyryl)lysine; alternate. Position 10 is an N6-acetyllysine; alternate (Lys10). Position 10 is an N6-methyllysine; alternate (Lys10). Position 10 is an N6-lactoyllysine; alternate (Lys10). At Ser11 the chain carries ADP-ribosylserine; alternate. Ser11 carries the post-translational modification Phosphoserine; alternate; by AURKB, AURKC, RPS6KA3, RPS6KA4 and RPS6KA5. Thr12 carries the post-translational modification Phosphothreonine; by PKC. N6-(2-hydroxyisobutyryl)lysine; alternate is present on Lys15. N6-(beta-hydroxybutyryl)lysine; alternate is present on Lys15. An N6-acetyllysine; alternate modification is found at Lys15. Lys15 carries the post-translational modification N6-lactoyllysine; alternate. Lys15 is modified (N6-glutaryllysine; alternate). Lys15 carries the N6-succinyllysine; alternate modification. At Arg18 the chain carries Asymmetric dimethylarginine. 2 positions are modified to N6-(2-hydroxyisobutyryl)lysine; alternate: Lys19 and Lys24. 2 positions are modified to N6-(beta-hydroxybutyryl)lysine; alternate: Lys19 and Lys24. An N6-acetyllysine; alternate mark is found at Lys19 and Lys24. Lys19 and Lys24 each carry N6-methyllysine; alternate. Residues Lys19 and Lys24 each carry the N6-lactoyllysine; alternate modification. 2 positions are modified to N6-glutaryllysine; alternate: Lys19 and Lys24. An N6-butyryllysine; alternate mark is found at Lys19 and Lys24. Position 27 is a citrulline (Arg27). Lys28 bears the N6,N6,N6-trimethyllysine; alternate mark. Position 28 is an N6,N6-dimethyllysine; alternate (Lys28). Lys28 is modified (N6-(2-hydroxyisobutyryl)lysine; alternate). Lys28 carries the N6-acetyllysine; alternate modification. An N6-methyllysine; alternate modification is found at Lys28. Lys28 bears the N6-lactoyllysine; alternate mark. Lys28 carries the post-translational modification N6-glutaryllysine; alternate. Residue Ser29 is modified to ADP-ribosylserine; alternate. Ser29 carries the phosphoserine; alternate; by AURKB, AURKC and RPS6KA5 modification. Ser32 is modified (phosphoserine). An N6,N6,N6-trimethyllysine; alternate modification is found at Lys37. N6,N6-dimethyllysine; alternate is present on Lys37. Lys37 is subject to N6-(2-hydroxyisobutyryl)lysine; alternate. Lys37 carries the N6-acetyllysine; alternate modification. Lys37 carries the N6-methyllysine; alternate modification. Lys38 carries the N6-methyllysine modification. Residue Tyr42 is modified to Phosphotyrosine. At Lys57 the chain carries N6,N6,N6-trimethyllysine; alternate. Position 57 is an N6-(2-hydroxyisobutyryl)lysine; alternate (Lys57). Position 57 is an N6-(beta-hydroxybutyryl)lysine; alternate (Lys57). Lys57 carries the post-translational modification N6-acetyllysine; alternate. N6-methyllysine; alternate is present on Lys57. Residue Lys57 is modified to N6-lactoyllysine; alternate. Lys57 is subject to N6-glutaryllysine; alternate. Lys57 bears the N6-succinyllysine; alternate mark. At Ser58 the chain carries Phosphoserine. Lys65 and Lys80 each carry N6-(2-hydroxyisobutyryl)lysine; alternate. Residues Lys65 and Lys80 each carry the N6-methyllysine; alternate modification. Residue Lys80 is modified to N6,N6,N6-trimethyllysine; alternate. At Lys80 the chain carries N6,N6-dimethyllysine; alternate. Residue Lys80 is modified to N6-acetyllysine; alternate. Lys80 carries the N6-lactoyllysine; alternate modification. Lys80 is subject to N6-glutaryllysine; alternate. Lys80 carries the post-translational modification N6-succinyllysine; alternate. Thr81 carries the phosphothreonine modification. Phosphoserine is present on Ser87. Thr108 is subject to Phosphothreonine. N6-acetyllysine; alternate is present on Lys116. An N6-glutaryllysine; alternate modification is found at Lys116.

This sequence belongs to the histone H3 family. The nucleosome is a histone octamer containing two molecules each of H2A, H2B, H3 and H4 assembled in one H3-H4 heterotetramer and two H2A-H2B heterodimers. The octamer wraps approximately 147 bp of DNA. Post-translationally, acetylation is generally linked to gene activation. Acetylation on Lys-19 (H3K18ac) favors methylation at Arg-18 (H3R17me). Citrullination at Arg-18 by PADI4 impairs methylation and represses transcription. In terms of processing, asymmetric dimethylation at Arg-18 (H3R17me2a) by CARM1 is linked to gene activation. Asymmetric dimethylation at Arg-3 (H3R2me2a) by PRMT6 is linked to gene repression and is mutually exclusive with H3 Lys-5 methylation (H3K4me2 and H3K4me3). H3R2me2a is present at the 3' of genes regardless of their transcription state and is enriched on inactive promoters, while it is absent on active promoters. Post-translationally, methylation at Lys-5 (H3K4me) and Lys-80 (H3K79me) are linked to gene activation. Methylation at Lys-5 (H3K4me) facilitates subsequent acetylation of H3 and H4. Methylation at Lys-80 (H3K79me) is associated with DNA double-strand break (DSB) responses and is a specific target for TP53BP1. Methylation at Lys-10 (H3K9me) and Lys-28 (H3K27me) are linked to gene repression. Methylation at Lys-10 (H3K9me) is a specific target for HP1 proteins (CBX1, CBX3 and CBX5) and prevents subsequent phosphorylation at Ser-11 (H3S10ph) and acetylation of H3 and H4. Methylation at Lys-5 (H3K4me) and Lys-80 (H3K79me) require preliminary monoubiquitination of H2B at 'Lys-120'. Methylation at Lys-10 (H3K9me) and Lys-28 (H3K27me) are enriched in inactive X chromosome chromatin. Monomethylation at Lys-57 (H3K56me1) by EHMT2/G9A in G1 phase promotes interaction with PCNA and is required for DNA replication. Phosphorylated at Thr-4 (H3T3ph) by HASPIN during prophase and dephosphorylated during anaphase. Phosphorylation at Ser-11 (H3S10ph) by AURKB is crucial for chromosome condensation and cell-cycle progression during mitosis and meiosis. In addition phosphorylation at Ser-11 (H3S10ph) by RPS6KA4 and RPS6KA5 is important during interphase because it enables the transcription of genes following external stimulation, like mitogens, stress, growth factors or UV irradiation and result in the activation of genes, such as c-fos and c-jun. Phosphorylation at Ser-11 (H3S10ph), which is linked to gene activation, prevents methylation at Lys-10 (H3K9me) but facilitates acetylation of H3 and H4. Phosphorylation at Ser-11 (H3S10ph) by AURKB mediates the dissociation of HP1 proteins (CBX1, CBX3 and CBX5) from heterochromatin. Phosphorylation at Ser-11 (H3S10ph) is also an essential regulatory mechanism for neoplastic cell transformation. Phosphorylated at Ser-29 (H3S28ph) by MAP3K20 isoform 1, RPS6KA5 or AURKB during mitosis or upon ultraviolet B irradiation. Phosphorylation at Thr-7 (H3T6ph) by PRKCB is a specific tag for epigenetic transcriptional activation that prevents demethylation of Lys-5 (H3K4me) by LSD1/KDM1A. At centromeres, specifically phosphorylated at Thr-12 (H3T11ph) from prophase to early anaphase, by DAPK3 and PKN1. Phosphorylation at Thr-12 (H3T11ph) by PKN1 or isoform M2 of PKM (PKM2) is a specific tag for epigenetic transcriptional activation that promotes demethylation of Lys-10 (H3K9me) by KDM4C/JMJD2C. Phosphorylation at Tyr-42 (H3Y41ph) by JAK2 promotes exclusion of CBX5 (HP1 alpha) from chromatin. In terms of processing, lysine deamination at Lys-5 (H3K4all) to form allysine is mediated by LOXL2. Allysine formation by LOXL2 only takes place on H3K4me3 and results in gene repression. Post-translationally, butyrylation of histones marks active promoters and competes with histone acetylation. It is present during late spermatogenesis. Succinylation at Lys-80 (H3K79succ) by KAT2A takes place with a maximum frequency around the transcription start sites of genes. It gives a specific tag for epigenetic transcription activation. In terms of processing, serine ADP-ribosylation constitutes the primary form of ADP-ribosylation of proteins in response to DNA damage. Serine ADP-ribosylation at Ser-11 (H3S10ADPr) is mutually exclusive with phosphorylation at Ser-11 (H3S10ph) and impairs acetylation at Lys-10 (H3K9ac).

It is found in the nucleus. The protein resides in the chromosome. Core component of nucleosome. Nucleosomes wrap and compact DNA into chromatin, limiting DNA accessibility to the cellular machineries which require DNA as a template. Histones thereby play a central role in transcription regulation, DNA repair, DNA replication and chromosomal stability. DNA accessibility is regulated via a complex set of post-translational modifications of histones, also called histone code, and nucleosome remodeling. This chain is Histone H3.3C, found in Bos taurus (Bovine).